The chain runs to 286 residues: uncharacterized protein (286 aa).

7 consecutive transmembrane segments (helical) span residues 30 to 50, 68 to 88, 99 to 119, 136 to 156, 169 to 189, 205 to 225, and 254 to 274; these read LTFM…LTVQ, LSTI…VTAF, WFWA…GILL, IVYA…LSAL, LFHI…LSFI, IIPG…VYFV, and SALF…YFIL.

It is found in the cell membrane. This is an uncharacterized protein from Mycoplasma genitalium (strain ATCC 33530 / DSM 19775 / NCTC 10195 / G37) (Mycoplasmoides genitalium).